The primary structure comprises 185 residues: Ribosome-recycling factor (185 aa).

It belongs to the RRF family.

It localises to the cytoplasm. Its function is as follows. Responsible for the release of ribosomes from messenger RNA at the termination of protein biosynthesis. May increase the efficiency of translation by recycling ribosomes from one round of translation to another. The polypeptide is Ribosome-recycling factor (Yersinia enterocolitica serotype O:8 / biotype 1B (strain NCTC 13174 / 8081)).